Consider the following 125-residue polypeptide: Histone H1-like protein HC1 (125 aa).

It belongs to the histone H1/H5 family. HCT subfamily.

Might have a role analogous to that of eukaryotic histone proteins. The protein is Histone H1-like protein HC1 (hctA) of Chlamydia muridarum (strain MoPn / Nigg).